The chain runs to 61 residues: Protein translocase subunit SecE (61 aa).

The helical transmembrane segment at 38–58 (GIGMILIGTIGMIIRIIGYLV) threads the bilayer.

The protein belongs to the SecE/SEC61-gamma family. As to quaternary structure, component of the Sec protein translocase complex. Heterotrimer consisting of SecY (alpha), SecG (beta) and SecE (gamma) subunits. The heterotrimers can form oligomers, although 1 heterotrimer is thought to be able to translocate proteins. Interacts with the ribosome. May interact with SecDF, and other proteins may be involved.

Its subcellular location is the cell membrane. Its function is as follows. Essential subunit of the Sec protein translocation channel SecYEG. Clamps together the 2 halves of SecY. May contact the channel plug during translocation. The protein is Protein translocase subunit SecE of Thermococcus kodakarensis (strain ATCC BAA-918 / JCM 12380 / KOD1) (Pyrococcus kodakaraensis (strain KOD1)).